Here is a 384-residue protein sequence, read N- to C-terminus: 8-amino-7-oxononanoate synthase (384 aa).

Arginine 21 is a binding site for substrate. A pyridoxal 5'-phosphate-binding site is contributed by 108–109 (GF). Histidine 133 is a substrate binding site. Residues serine 179, histidine 207, and threonine 233 each coordinate pyridoxal 5'-phosphate. An N6-(pyridoxal phosphate)lysine modification is found at lysine 236. Threonine 352 is a substrate binding site.

This sequence belongs to the class-II pyridoxal-phosphate-dependent aminotransferase family. BioF subfamily. As to quaternary structure, homodimer. Pyridoxal 5'-phosphate is required as a cofactor.

It catalyses the reaction 6-carboxyhexanoyl-[ACP] + L-alanine + H(+) = (8S)-8-amino-7-oxononanoate + holo-[ACP] + CO2. Its pathway is cofactor biosynthesis; biotin biosynthesis. Functionally, catalyzes the decarboxylative condensation of pimeloyl-[acyl-carrier protein] and L-alanine to produce 8-amino-7-oxononanoate (AON), [acyl-carrier protein], and carbon dioxide. The chain is 8-amino-7-oxononanoate synthase from Shigella boydii serotype 18 (strain CDC 3083-94 / BS512).